Consider the following 212-residue polypeptide: Peroxisomal membrane protein 4 (212 aa).

N-linked (GlcNAc...) asparagine glycosylation is present at N57. 2 helical membrane passes run 97 to 117 and 153 to 173; these read GKTY…LVFG and WDPF…LFEY. N-linked (GlcNAc...) asparagine glycosylation is present at N206.

Belongs to the peroxisomal membrane protein PXMP2/4 family. As to quaternary structure, interacts with PEX19. Expressed in normal prostate epithelial cells, and androgen-sensitive prostate adenocarcinoma cells. Not expressed in androgen-insensitive prostate adenocarcinoma cells.

The protein localises to the peroxisome membrane. This is Peroxisomal membrane protein 4 (PXMP4) from Homo sapiens (Human).